Here is a 312-residue protein sequence, read N- to C-terminus: Elongation factor Ts (312 aa).

The tract at residues 80 to 83 is involved in Mg(2+) ion dislocation from EF-Tu; that stretch reads TDFV.

It belongs to the EF-Ts family.

The protein localises to the cytoplasm. Functionally, associates with the EF-Tu.GDP complex and induces the exchange of GDP to GTP. It remains bound to the aminoacyl-tRNA.EF-Tu.GTP complex up to the GTP hydrolysis stage on the ribosome. This chain is Elongation factor Ts, found in Maricaulis maris (strain MCS10) (Caulobacter maris).